Consider the following 461-residue polypeptide: ATP-dependent protease ATPase subunit HslU (461 aa).

Residues Ile18 and 60–65 contribute to the ATP site; that span reads GVGKTE. A disordered region spans residues 157 to 178; sequence EGSSVKPEPTAQQKESRQKMRK. Residues Asp273, Glu339, and Arg411 each contribute to the ATP site.

It belongs to the ClpX chaperone family. HslU subfamily. In terms of assembly, a double ring-shaped homohexamer of HslV is capped on each side by a ring-shaped HslU homohexamer. The assembly of the HslU/HslV complex is dependent on binding of ATP.

The protein resides in the cytoplasm. In terms of biological role, ATPase subunit of a proteasome-like degradation complex; this subunit has chaperone activity. The binding of ATP and its subsequent hydrolysis by HslU are essential for unfolding of protein substrates subsequently hydrolyzed by HslV. HslU recognizes the N-terminal part of its protein substrates and unfolds these before they are guided to HslV for hydrolysis. The chain is ATP-dependent protease ATPase subunit HslU from Magnetococcus marinus (strain ATCC BAA-1437 / JCM 17883 / MC-1).